A 257-amino-acid chain; its full sequence is Histidine/lysine/arginine/ornithine transport ATP-binding protein HisP (257 aa).

Residues Leu-6–Leu-252 form the ABC transporter domain. ATP-binding residues include Ser-40, Gly-41, Gly-43, Lys-44, Ser-45, and Thr-46.

Belongs to the ABC transporter superfamily. In terms of assembly, the HisPMQJ complex is composed of two ATP-binding proteins (HisP), two transmembrane proteins (HisM and HisQ) and a solute-binding protein (HisJ). The HisPMQ-ArgT complex is composed of two ATP-binding proteins (HisP), two transmembrane proteins (HisM and HisQ) and a solute-binding protein (ArgT).

The protein resides in the cell inner membrane. The catalysed reaction is a polar amino acid(out) + ATP + H2O = a polar amino acid(in) + ADP + phosphate + H(+). It catalyses the reaction L-histidine(out) + ATP + H2O = L-histidine(in) + ADP + phosphate + H(+). The enzyme catalyses L-lysine(out) + ATP + H2O = L-lysine(in) + ADP + phosphate + H(+). It carries out the reaction L-arginine(out) + ATP + H2O = L-arginine(in) + ADP + phosphate + H(+). The catalysed reaction is L-ornithine(out) + ATP + H2O = L-ornithine(in) + ADP + phosphate + H(+). In terms of biological role, part of the ABC transporter complex HisPMQJ involved in histidine transport. Is also part of the ABC transporter complex HisPMQ-ArgT involved in lysine/arginine/ornithine transport. Shows ATPase activity. Responsible for energy coupling to the transport system. The chain is Histidine/lysine/arginine/ornithine transport ATP-binding protein HisP from Escherichia coli (strain K12).